The primary structure comprises 108 residues: Small ribosomal subunit protein bS16 (108 aa).

This sequence belongs to the bacterial ribosomal protein bS16 family.

This chain is Small ribosomal subunit protein bS16, found in Orientia tsutsugamushi (strain Boryong) (Rickettsia tsutsugamushi).